The following is a 217-amino-acid chain: Thiamine-phosphate synthase (217 aa).

Residues 37 to 41 and Asn-72 each bind 4-amino-2-methyl-5-(diphosphooxymethyl)pyrimidine; that span reads QFREK. Positions 73 and 92 each coordinate Mg(2+). Residue Ser-110 coordinates 4-amino-2-methyl-5-(diphosphooxymethyl)pyrimidine. 136 to 138 contributes to the 2-[(2R,5Z)-2-carboxy-4-methylthiazol-5(2H)-ylidene]ethyl phosphate binding site; the sequence is TVS. A 4-amino-2-methyl-5-(diphosphooxymethyl)pyrimidine-binding site is contributed by Lys-139. 2-[(2R,5Z)-2-carboxy-4-methylthiazol-5(2H)-ylidene]ethyl phosphate is bound by residues Gly-168 and 188-189; that span reads IS.

It belongs to the thiamine-phosphate synthase family. It depends on Mg(2+) as a cofactor.

The enzyme catalyses 2-[(2R,5Z)-2-carboxy-4-methylthiazol-5(2H)-ylidene]ethyl phosphate + 4-amino-2-methyl-5-(diphosphooxymethyl)pyrimidine + 2 H(+) = thiamine phosphate + CO2 + diphosphate. The catalysed reaction is 2-(2-carboxy-4-methylthiazol-5-yl)ethyl phosphate + 4-amino-2-methyl-5-(diphosphooxymethyl)pyrimidine + 2 H(+) = thiamine phosphate + CO2 + diphosphate. It carries out the reaction 4-methyl-5-(2-phosphooxyethyl)-thiazole + 4-amino-2-methyl-5-(diphosphooxymethyl)pyrimidine + H(+) = thiamine phosphate + diphosphate. It participates in cofactor biosynthesis; thiamine diphosphate biosynthesis; thiamine phosphate from 4-amino-2-methyl-5-diphosphomethylpyrimidine and 4-methyl-5-(2-phosphoethyl)-thiazole: step 1/1. Its function is as follows. Condenses 4-methyl-5-(beta-hydroxyethyl)thiazole monophosphate (THZ-P) and 2-methyl-4-amino-5-hydroxymethyl pyrimidine pyrophosphate (HMP-PP) to form thiamine monophosphate (TMP). This is Thiamine-phosphate synthase from Anoxybacillus flavithermus (strain DSM 21510 / WK1).